A 513-amino-acid chain; its full sequence is Fructose import ATP-binding protein FruK (513 aa).

2 consecutive ABC transporter domains span residues 8–244 (VVMK…IGKS) and 262–505 (PGEK…IANT). Residue 40 to 47 (GENGAGKS) participates in ATP binding.

The protein belongs to the ABC transporter superfamily. In terms of assembly, the complex is composed of an ATP-binding protein (FruK), two transmembrane proteins (FruF and FruG) and a solute-binding protein (FruE).

It localises to the cell membrane. The catalysed reaction is D-fructose(out) + ATP + H2O = D-fructose(in) + ADP + phosphate + H(+). Part of the high-affinity ABC transporter complex FruEKFG involved in fructose uptake. Can also transport ribose and xylose, with lower affinity. Probably responsible for energy coupling to the transport system. The sequence is that of Fructose import ATP-binding protein FruK from Bifidobacterium longum (strain NCC 2705).